The chain runs to 700 residues: Elongation factor G 2 (700 aa).

Positions 8-290 constitute a tr-type G domain; the sequence is ERYRNIGISA…AVVDYLPSPI (283 aa). GTP-binding positions include 17–24, 88–92, and 142–145; these read AHIDAGKT, DTPGH, and NKMD.

It belongs to the TRAFAC class translation factor GTPase superfamily. Classic translation factor GTPase family. EF-G/EF-2 subfamily.

The protein localises to the cytoplasm. Catalyzes the GTP-dependent ribosomal translocation step during translation elongation. During this step, the ribosome changes from the pre-translocational (PRE) to the post-translocational (POST) state as the newly formed A-site-bound peptidyl-tRNA and P-site-bound deacylated tRNA move to the P and E sites, respectively. Catalyzes the coordinated movement of the two tRNA molecules, the mRNA and conformational changes in the ribosome. This is Elongation factor G 2 (fusB) from Ralstonia nicotianae (strain ATCC BAA-1114 / GMI1000) (Ralstonia solanacearum).